We begin with the raw amino-acid sequence, 765 residues long: Spastin (765 aa).

Residues 1–94 (MVRTKNQSSS…TSGYGPRGGT (94 aa)) are disordered. The Cytoplasmic portion of the chain corresponds to 1–107 (MVRTKNQSSS…KQNLYVVSFP (107 aa)). The segment at 1–195 (MVRTKNQSSS…ALLPLEMATN (195 aa)) is required for localization to punctate cytoplasmic foci. Positions 8-19 (SSSSSASSSTKS) are enriched in low complexity. Polar residues predominate over residues 48–58 (SSKLSSNRQRA). Positions 59 to 72 (TITTTTTSTTPGSS) are enriched in low complexity. Positions 108 to 128 (IIFLFNVLRSLIYQLFCIFRY) form an intramembrane region, helical. Over 129–765 (LYCASTKVIY…WSQDYGDITI (637 aa)) the chain is Cytoplasmic. Residues 193–765 (ATNRGGSGGY…WSQDYGDITI (573 aa)) form a sufficient for interaction with microtubules and microtubule severing region. The region spanning 218–293 (HRRAFEYISK…SMARDRLHFL (76 aa)) is the MIT domain. A disordered region spans residues 329-462 (QTNSKAAAVE…GSGSGASTPM (134 aa)). Over residues 355–364 (SGTGSSAGTS) the composition is skewed to low complexity. 2 stretches are compositionally biased toward polar residues: residues 389-407 (NKSQTLPRNLGSKTTSTSV) and 428-444 (QFSSGRNTPPQRSRTPI). The segment at 446 to 462 (NNAASGSGSGSGASTPM) is required for interaction with microtubules. 530 to 537 (GPPGNGKT) contributes to the ATP binding site.

This sequence belongs to the AAA ATPase family. Spastin subfamily. In terms of assembly, homohexamer. The homohexamer is stabilized by ATP-binding. The homohexamer may adopt a ring conformation through which microtubules pass prior to being severed. Interacts with microtubules. Interacts with atl; may be involved in microtubule dynamics.

It localises to the membrane. Its subcellular location is the cytoplasm. It is found in the cytoskeleton. The protein resides in the microtubule organizing center. The protein localises to the centrosome. It localises to the chromosome. Its subcellular location is the lipid droplet. The enzyme catalyses n ATP + n H2O + a microtubule = n ADP + n phosphate + (n+1) alpha/beta tubulin heterodimers.. Its function is as follows. ATP-dependent microtubule severing protein. Stimulates microtubule minus-end depolymerization and poleward microtubule flux in the mitotic spindle. Regulates microtubule stability in the neuromuscular junction synapse. Involved in lipid metabolism by regulating the size and distribution of lipid droplets. Involved in axon regeneration by regulating microtubule severing. This is Spastin from Drosophila mojavensis (Fruit fly).